The primary structure comprises 1331 residues: Xanthine dehydrogenase/oxidase (1331 aa).

The region spanning 4-91 (DELVFFVNGK…HVAVTTVEGI (88 aa)) is the 2Fe-2S ferredoxin-type domain. 8 residues coordinate [2Fe-2S] cluster: Cys-43, Cys-48, Cys-51, Cys-73, Cys-113, Cys-116, Cys-148, and Cys-150. Positions 229 to 412 (FEGERVTWIQ…LSIEIPYSRE (184 aa)) constitute an FAD-binding PCMH-type domain. FAD contacts are provided by residues 257–264 (LVVGNTEI), Phe-335, 345–349 (SIGGN), Asp-358, Leu-402, and Lys-420. A disulfide bridge connects residues Cys-534 and Cys-991. Mo-molybdopterin-binding residues include Gln-766 and Phe-797. Glu-801 and Arg-879 together coordinate substrate. Arg-911 is a Mo-molybdopterin binding site. The substrate site is built by Phe-913 and Thr-1009. Residue Ala-1078 coordinates Mo-molybdopterin. Glu-1260 functions as the Proton acceptor in the catalytic mechanism.

It belongs to the xanthine dehydrogenase family. As to quaternary structure, homodimer. Interacts with BTN1A1. FAD serves as cofactor. Requires Mo-molybdopterin as cofactor. The cofactor is [2Fe-2S] cluster. Post-translationally, subject to partial proteolysis; this alters the enzyme from the dehydrogenase form (D) to the oxidase form (O). Contains sulfhydryl groups that are easily oxidized (in vitro); this alters the enzyme from the dehydrogenase form (D) to the oxidase form (O).

Its subcellular location is the cytoplasm. It is found in the peroxisome. The protein resides in the secreted. It catalyses the reaction xanthine + NAD(+) + H2O = urate + NADH + H(+). It carries out the reaction hypoxanthine + NAD(+) + H2O = xanthine + NADH + H(+). The catalysed reaction is xanthine + O2 + H2O = urate + H2O2. With respect to regulation, can be converted from the dehydrogenase form (D) to the oxidase form (O) irreversibly by proteolysis or reversibly through the oxidation of sulfhydryl groups. Key enzyme in purine degradation. Catalyzes the oxidation of hypoxanthine to xanthine. Catalyzes the oxidation of xanthine to uric acid. Contributes to the generation of reactive oxygen species. The protein is Xanthine dehydrogenase/oxidase (XDH) of Felis catus (Cat).